The following is a 307-amino-acid chain: Porphobilinogen deaminase (307 aa).

Cys241 carries the post-translational modification S-(dipyrrolylmethanemethyl)cysteine.

It belongs to the HMBS family. As to quaternary structure, monomer. Dipyrromethane is required as a cofactor.

It carries out the reaction 4 porphobilinogen + H2O = hydroxymethylbilane + 4 NH4(+). It functions in the pathway porphyrin-containing compound metabolism; protoporphyrin-IX biosynthesis; coproporphyrinogen-III from 5-aminolevulinate: step 2/4. Tetrapolymerization of the monopyrrole PBG into the hydroxymethylbilane pre-uroporphyrinogen in several discrete steps. The chain is Porphobilinogen deaminase from Coxiella burnetii (strain RSA 331 / Henzerling II).